Here is a 242-residue protein sequence, read N- to C-terminus: Lactate utilization protein A 2 (242 aa).

It belongs to the LutA/YkgE family.

Functionally, is involved in L-lactate degradation and allows cells to grow with lactate as the sole carbon source. The sequence is that of Lactate utilization protein A 2 from Bacillus cereus (strain ZK / E33L).